A 449-amino-acid chain; its full sequence is Methionine aminopeptidase 2 (449 aa).

The disordered stretch occupies residues 1 to 91; that stretch reads MAAQAAPELA…PRIPLTTLFP (91 aa). The span at 34–50 shows a compositional bias: acidic residues; sequence EEAENEGDSEDDRDDEQ. Positions 61 to 75 are enriched in basic residues; it reads KKKKKKRPKKKKKTA. Residue His199 participates in substrate binding. Residues Asp219, Asp230, and His299 each coordinate a divalent metal cation. A substrate-binding site is contributed by His307. A divalent metal cation contacts are provided by Glu335 and Glu430.

This sequence belongs to the peptidase M24A family. Methionine aminopeptidase eukaryotic type 2 subfamily. Co(2+) serves as cofactor. Zn(2+) is required as a cofactor. The cofactor is Mn(2+). It depends on Fe(2+) as a cofactor.

Its subcellular location is the cytoplasm. The enzyme catalyses Release of N-terminal amino acids, preferentially methionine, from peptides and arylamides.. Its function is as follows. Cotranslationally removes the N-terminal methionine from nascent proteins. The N-terminal methionine is often cleaved when the second residue in the primary sequence is small and uncharged (Met-Ala-, Cys, Gly, Pro, Ser, Thr, or Val). This Trichophyton verrucosum (strain HKI 0517) protein is Methionine aminopeptidase 2.